A 238-amino-acid polypeptide reads, in one-letter code: HTH-type transcriptional regulator TreR (238 aa).

In terms of domain architecture, HTH gntR-type spans 1–71 (MKVNKFITIY…RGKGSVVLNR (71 aa)). The segment at residues 31-50 (EHELTAQYGTSRETVRKALH) is a DNA-binding region (H-T-H motif).

Dimer of dimers.

Repressor for the trePA operon. It is able to bind trehalose-6-phosphate. The chain is HTH-type transcriptional regulator TreR (treR) from Bacillus subtilis (strain 168).